The primary structure comprises 380 residues: Queuine tRNA-ribosyltransferase (380 aa).

The active-site Proton acceptor is the aspartate 95. Substrate contacts are provided by residues 95–99 (DSGGF), aspartate 149, glutamine 192, and glycine 219. Residues 250-256 (GVGSADA) are RNA binding. Aspartate 269 serves as the catalytic Nucleophile. Residues 274-278 (TRIAR) form an RNA binding; important for wobble base 34 recognition region. Zn(2+) is bound by residues cysteine 307, cysteine 309, cysteine 312, and histidine 338.

It belongs to the queuine tRNA-ribosyltransferase family. As to quaternary structure, homodimer. Within each dimer, one monomer is responsible for RNA recognition and catalysis, while the other monomer binds to the replacement base PreQ1. It depends on Zn(2+) as a cofactor.

It catalyses the reaction 7-aminomethyl-7-carbaguanine + guanosine(34) in tRNA = 7-aminomethyl-7-carbaguanosine(34) in tRNA + guanine. The protein operates within tRNA modification; tRNA-queuosine biosynthesis. Catalyzes the base-exchange of a guanine (G) residue with the queuine precursor 7-aminomethyl-7-deazaguanine (PreQ1) at position 34 (anticodon wobble position) in tRNAs with GU(N) anticodons (tRNA-Asp, -Asn, -His and -Tyr). Catalysis occurs through a double-displacement mechanism. The nucleophile active site attacks the C1' of nucleotide 34 to detach the guanine base from the RNA, forming a covalent enzyme-RNA intermediate. The proton acceptor active site deprotonates the incoming PreQ1, allowing a nucleophilic attack on the C1' of the ribose to form the product. After dissociation, two additional enzymatic reactions on the tRNA convert PreQ1 to queuine (Q), resulting in the hypermodified nucleoside queuosine (7-(((4,5-cis-dihydroxy-2-cyclopenten-1-yl)amino)methyl)-7-deazaguanosine). This chain is Queuine tRNA-ribosyltransferase, found in Lactiplantibacillus plantarum (strain ATCC BAA-793 / NCIMB 8826 / WCFS1) (Lactobacillus plantarum).